The chain runs to 187 residues: Ribosome-recycling factor (187 aa).

It belongs to the RRF family.

The protein localises to the cytoplasm. Functionally, responsible for the release of ribosomes from messenger RNA at the termination of protein biosynthesis. May increase the efficiency of translation by recycling ribosomes from one round of translation to another. This Mycoplasmopsis pulmonis (strain UAB CTIP) (Mycoplasma pulmonis) protein is Ribosome-recycling factor.